We begin with the raw amino-acid sequence, 512 residues long: Glucose-1-phosphate adenylyltransferase small subunit 2, chloroplastic (512 aa).

The tract at residues 1–21 is disordered; that stretch reads MAAIGVLKVPPSSSSSSSSSS. The transit peptide at 1-63 directs the protein to the chloroplast; it reads MAAIGVLKVP…RNPFIVSPKA (63 aa). Residues 12 to 21 are compositionally biased toward low complexity; that stretch reads SSSSSSSSSS.

This sequence belongs to the bacterial/plant glucose-1-phosphate adenylyltransferase family. As to quaternary structure, heterotetramer. Leaves and seeds.

Its subcellular location is the plastid. It localises to the chloroplast. It catalyses the reaction alpha-D-glucose 1-phosphate + ATP + H(+) = ADP-alpha-D-glucose + diphosphate. Its pathway is glycan biosynthesis; starch biosynthesis. Activated by 3'phosphoglycerate, inhibited by orthophosphate. Allosteric regulation. This protein plays a role in synthesis of starch. It catalyzes the synthesis of the activated glycosyl donor, ADP-glucose from Glc-1-P and ATP. This Vicia faba (Broad bean) protein is Glucose-1-phosphate adenylyltransferase small subunit 2, chloroplastic (AGPP).